A 794-amino-acid chain; its full sequence is Protein sel-1 homolog 1 (794 aa).

The N-terminal stretch at 1-21 (MRVRIGLTLLLCAVLLSLASA) is a signal peptide. Residues 21-50 (ASSDEEGSQDESLDSKTTLTSDESVKDHTT) are disordered. Positions 22–737 (SSDEEGSQDE…DMFTQLDMDQ (716 aa)) are interaction with ERLEC1, OS9 and SYVN1. Topologically, residues 22 to 738 (SSDEEGSQDE…MFTQLDMDQL (717 aa)) are lumenal. The segment covering 23-32 (SDEEGSQDES) has biased composition (acidic residues). Serine 63 carries the phosphoserine modification. The span at 64 to 77 (EESELESSIQEEED) shows a compositional bias: acidic residues. The segment at 64–109 (EESELESSIQEEEDSLKSQEGESVTEDISFLESPNPENKDYEEPKK) is disordered. Residues 122–170 (AHGEPCHFPFLFLDKEYDECTSDGREDGRLWCATTYDYKADEKWGFCET) form the Fibronectin type-II domain. Disulfide bonds link cysteine 127-cysteine 153 and cysteine 141-cysteine 168. Sel1-like repeat units follow at residues 183–218 (AEMM…SMNH), 219–254 (TKAL…EEGS), 255–290 (PKGQ…LGGN), 291–326 (LIAH…NHVA), 373–409 (VQAQ…NAGN), 410–446 (SHAM…DMGN), 447–482 (PVGQ…EQGW), 483–518 (VDGQ…QGGH), and 519–554 (ILAF…ERGR). 2 N-linked (GlcNAc...) asparagine glycosylation sites follow: asparagine 195 and asparagine 217. A glycan (N-linked (GlcNAc...) asparagine) is linked at asparagine 272. Residues 352–537 (NSGMLEEDLI…MHASGTGVMR (186 aa)) are important for homodimerization and oligomerization. Asparagine 431 carries N-linked (GlcNAc...) asparagine glycosylation. Residue asparagine 608 is glycosylated (N-linked (GlcNAc...) asparagine). 2 Sel1-like repeats span residues 627-662 (TVAR…EQQH) and 664-699 (AQAM…EASP). The tract at residues 643 to 723 (TDVDYETAFI…VVYFLQYIRE (81 aa)) is interaction with SYVN1. The interval 738–794 (LLGPEWDLYLMTIIALLLGTVIAYRQRQHQDMPAPRPPGPRPAPPQQEGPPEQQPPQ) is mediates retention in the endoplasmic reticulum. A helical membrane pass occupies residues 739-759 (LGPEWDLYLMTIIALLLGTVI). At 760–794 (AYRQRQHQDMPAPRPPGPRPAPPQQEGPPEQQPPQ) the chain is on the cytoplasmic side. Residues 766–794 (HQDMPAPRPPGPRPAPPQQEGPPEQQPPQ) form a disordered region. Over residues 771 to 794 (APRPPGPRPAPPQQEGPPEQQPPQ) the composition is skewed to pro residues.

This sequence belongs to the sel-1 family. As to quaternary structure, homodimer and homooligomer. May form a complex with ERLEC1, HSPA5, OS9, and SYVN1. Interacts with FOXRED2 and EDEM1. Interacts with LPL. Interacts with LMF1; may stabilize the complex formed by LPL and LMF1 and thereby promote the export of LPL dimers. Component of the HRD1 complex, which comprises at least SYNV1/HRD1, DERL1/2, FAM8A1, HERPUD1/HERP, OS9, SEL1L and UBE2J1. SYNV1 assembles with SEL1L and FAM8A1 through its transmembrane domains, but interaction with its cytoplasmic domain is required to confer stability to FAM8A1 and enhance recruitment of HERPUD1. The interaction with SYNV1/HRD1 is direct. (Microbial infection) Interacts with human cytomegalovirus protein UL148. N-glycosylated. In terms of tissue distribution, highly expressed in pancreas.

It localises to the endoplasmic reticulum membrane. Its function is as follows. Plays a role in the endoplasmic reticulum quality control (ERQC) system also called ER-associated degradation (ERAD) involved in ubiquitin-dependent degradation of misfolded endoplasmic reticulum proteins. Enhances SYVN1 stability. Plays a role in LPL maturation and secretion. Required for normal differentiation of the pancreas epithelium, and for normal exocrine function and survival of pancreatic cells. May play a role in Notch signaling. In Homo sapiens (Human), this protein is Protein sel-1 homolog 1.